A 215-amino-acid chain; its full sequence is MSKVYDWFEERLEIQAIADDITSKYVPPHVNIFYCLGGITLTCFLVQVATGFAMTFYYRPTVTEAFASVQYIMTEANFGWLIRSVHRWSASMMVLMMILHVFRVYLTGGFKKPRELTWVTGVVLAVLTASFGVTGYSLPRDQIGYWAVKIVTGVPEAIPVIGSPLVELLRGSASVGQSTLTRFYSLHTFVLPLLTAVFMLMHFPMIRKQGISGPL.

A helical membrane pass occupies residues 32 to 52; that stretch reads IFYCLGGITLTCFLVQVATGF. Cys35 provides a ligand contact to heme c. Residues His86 and His100 each contribute to the heme b site. 3 helical membrane passes run 90–110, 116–136, and 186–206; these read ASMM…TGGF, LTWV…VTGY, and LHTF…FPMI. Residues His187 and His202 each coordinate heme b.

Belongs to the cytochrome b family. PetB subfamily. The 4 large subunits of the cytochrome b6-f complex are cytochrome b6, subunit IV (17 kDa polypeptide, PetD), cytochrome f and the Rieske protein, while the 4 small subunits are PetG, PetL, PetM and PetN. The complex functions as a dimer. Requires heme b as cofactor. Heme c is required as a cofactor.

The protein resides in the plastid. Its subcellular location is the chloroplast thylakoid membrane. Component of the cytochrome b6-f complex, which mediates electron transfer between photosystem II (PSII) and photosystem I (PSI), cyclic electron flow around PSI, and state transitions. The sequence is that of Cytochrome b6 from Cucumis sativus (Cucumber).